A 50-amino-acid chain; its full sequence is Protein hunchback (50 aa).

3 C2H2-type zinc fingers span residues 1 to 5 (HILKH), 11 to 33 (IRCPECNYTCVNRSMLTSHMKSH), and 39 to 50 (YRCLDCNYATKY).

The protein belongs to the hunchback C2H2-type zinc-finger protein family.

Its subcellular location is the nucleus. Gap class segmentation protein that controls development of head structures. In Bradysia coprophila (Dark-winged fungus gnat), this protein is Protein hunchback (hb).